Here is a 447-residue protein sequence, read N- to C-terminus: Trigger factor (447 aa).

The region spanning 188–273 is the PPIase FKBP-type domain; sequence GDKLVIDFEG…VNDIQVAEDF (86 aa).

This sequence belongs to the FKBP-type PPIase family. Tig subfamily.

The protein resides in the cytoplasm. It carries out the reaction [protein]-peptidylproline (omega=180) = [protein]-peptidylproline (omega=0). Functionally, involved in protein export. Acts as a chaperone by maintaining the newly synthesized protein in an open conformation. Functions as a peptidyl-prolyl cis-trans isomerase. The polypeptide is Trigger factor (Wolbachia sp. subsp. Brugia malayi (strain TRS)).